Here is a 55-residue protein sequence, read N- to C-terminus: Spermatid nuclear transition protein 1 (55 aa).

Over residues 1–42 (MSTSRKLKTHGMRRGKNRAPHKGVKRGGSKRKYRKSSLKSRK) the composition is skewed to basic residues. A disordered region spans residues 1–55 (MSTSRKLKTHGMRRGKNRAPHKGVKRGGSKRKYRKSSLKSRKRGDDASRNYRSHL). Phosphoserine is present on residues S36, S37, and S40.

Belongs to the nuclear transition protein 1 family. Testis.

It localises to the nucleus. The protein resides in the chromosome. Functionally, plays a key role in the replacement of histones to protamine in the elongating spermatids of mammals. In condensing spermatids, loaded onto the nucleosomes, where it promotes the recruitment and processing of protamines, which are responsible for histone eviction. This chain is Spermatid nuclear transition protein 1 (Tnp1), found in Rattus norvegicus (Rat).